A 441-amino-acid polypeptide reads, in one-letter code: MEQAPAPKISFVSLGCPKALVDSERIITRLRAEGYELARKHDGADIVIVNTCGFLDSAKQESLGAIGEAMAENGKVIVTGCMGAEPEQIEAAYPNVLSITGPQQYESVLEAVHRALPPIHNPHLDLMPPQGIKLTPRHYAYLKISEGCNNRCSFCIIPKLRGDLVSRPAAEVLREAEQLVKAGVKELLVVSQDTSAYGVDLKYAESQWQDRAVRARFYDLAKELGSLGAWVRLQYVYPYPHVDEVIELMAKGAVLPYLDIPFQHAASSVLTRMKRPAAQDKTLARIKRWRETCPDLALRSTFIVGFPGETEQEFAELLDWLEEAEIDRLGAFKYEPVQGAASNALPDQIPAEVKQQRWDALMARQQKISARRLKRKVGTRQQVIIDEAGPNGAKGRSKADAPQIDGHVYLSSRRPLRVGELVTAKIDRADAYDLHGTVAGF.

The region spanning 7–117 (PKISFVSLGC…VLEAVHRALP (111 aa)) is the MTTase N-terminal domain. 6 residues coordinate [4Fe-4S] cluster: C16, C52, C81, C148, C152, and C155. The 238-residue stretch at 134–371 (LTPRHYAYLK…MARQQKISAR (238 aa)) folds into the Radical SAM core domain. A TRAM domain is found at 374–440 (KRKVGTRQQV…AYDLHGTVAG (67 aa)).

It belongs to the methylthiotransferase family. RimO subfamily. It depends on [4Fe-4S] cluster as a cofactor.

The protein localises to the cytoplasm. It catalyses the reaction L-aspartate(89)-[ribosomal protein uS12]-hydrogen + (sulfur carrier)-SH + AH2 + 2 S-adenosyl-L-methionine = 3-methylsulfanyl-L-aspartate(89)-[ribosomal protein uS12]-hydrogen + (sulfur carrier)-H + 5'-deoxyadenosine + L-methionine + A + S-adenosyl-L-homocysteine + 2 H(+). Catalyzes the methylthiolation of an aspartic acid residue of ribosomal protein uS12. This Rhodopseudomonas palustris (strain BisA53) protein is Ribosomal protein uS12 methylthiotransferase RimO.